The sequence spans 176 residues: Large ribosomal subunit protein uL16 (176 aa).

This sequence belongs to the universal ribosomal protein uL16 family.

In Thermoplasma acidophilum (strain ATCC 25905 / DSM 1728 / JCM 9062 / NBRC 15155 / AMRC-C165), this protein is Large ribosomal subunit protein uL16.